Here is a 374-residue protein sequence, read N- to C-terminus: Ribosomal RNA large subunit methyltransferase G (374 aa).

This sequence belongs to the methyltransferase superfamily. RlmG family.

It is found in the cytoplasm. The enzyme catalyses guanosine(1835) in 23S rRNA + S-adenosyl-L-methionine = N(2)-methylguanosine(1835) in 23S rRNA + S-adenosyl-L-homocysteine + H(+). Functionally, specifically methylates the guanine in position 1835 (m2G1835) of 23S rRNA. This Pseudomonas fluorescens (strain ATCC BAA-477 / NRRL B-23932 / Pf-5) protein is Ribosomal RNA large subunit methyltransferase G.